A 416-amino-acid chain; its full sequence is UBX domain-containing protein 4 (416 aa).

One can recognise a UBX domain in the interval 273-350; it reads KAISECLLRV…EFGSKTMLLF (78 aa). The segment at 376-402 is disordered; the sequence is TRTTPSVNTINKSNPQGPSDNATSIKK. The segment covering 378–402 has biased composition (polar residues); that stretch reads TTPSVNTINKSNPQGPSDNATSIKK.

The protein localises to the nucleus. Its subcellular location is the cytoplasm. Involved in CDC48-dependent protein degradation through the ubiquitin/proteasome pathway. The polypeptide is UBX domain-containing protein 4 (UBX4) (Saccharomyces cerevisiae (strain ATCC 204508 / S288c) (Baker's yeast)).